A 545-amino-acid polypeptide reads, in one-letter code: CTP synthase (545 aa).

Residues 1-266 (MTTRYIFVTG…DELVVKRFGI (266 aa)) form an amidoligase domain region. Ser-14 is a CTP binding site. Residue Ser-14 participates in UTP binding. ATP contacts are provided by residues 15 to 20 (SLGKGI) and Asp-72. Asp-72 and Glu-140 together coordinate Mg(2+). Residues 147–149 (DIE), 187–192 (KTKPTQ), and Lys-223 each bind CTP. Residues 187–192 (KTKPTQ) and Lys-223 contribute to the UTP site. 239–241 (KDV) is an ATP binding site. Residues 291–542 (TIGMVGKYIE…VAAATAYQKR (252 aa)) enclose the Glutamine amidotransferase type-1 domain. Gly-352 lines the L-glutamine pocket. Cys-379 functions as the Nucleophile; for glutamine hydrolysis in the catalytic mechanism. L-glutamine-binding positions include 380-383 (LGLQ), Glu-403, and Arg-470. Catalysis depends on residues His-515 and Glu-517.

This sequence belongs to the CTP synthase family. As to quaternary structure, homotetramer.

The catalysed reaction is UTP + L-glutamine + ATP + H2O = CTP + L-glutamate + ADP + phosphate + 2 H(+). The enzyme catalyses L-glutamine + H2O = L-glutamate + NH4(+). It catalyses the reaction UTP + NH4(+) + ATP = CTP + ADP + phosphate + 2 H(+). It functions in the pathway pyrimidine metabolism; CTP biosynthesis via de novo pathway; CTP from UDP: step 2/2. Its activity is regulated as follows. Allosterically activated by GTP, when glutamine is the substrate; GTP has no effect on the reaction when ammonia is the substrate. The allosteric effector GTP functions by stabilizing the protein conformation that binds the tetrahedral intermediate(s) formed during glutamine hydrolysis. Inhibited by the product CTP, via allosteric rather than competitive inhibition. In terms of biological role, catalyzes the ATP-dependent amination of UTP to CTP with either L-glutamine or ammonia as the source of nitrogen. Regulates intracellular CTP levels through interactions with the four ribonucleotide triphosphates. The sequence is that of CTP synthase from Shewanella sediminis (strain HAW-EB3).